Consider the following 239-residue polypeptide: uncharacterized protein (239 aa).

This is an uncharacterized protein from Methanocaldococcus jannaschii (strain ATCC 43067 / DSM 2661 / JAL-1 / JCM 10045 / NBRC 100440) (Methanococcus jannaschii).